A 670-amino-acid polypeptide reads, in one-letter code: DNA ligase (670 aa).

Residues 32 to 36, 81 to 82, and Glu-113 contribute to the NAD(+) site; these read DAEYD and SL. Residue Lys-115 is the N6-AMP-lysine intermediate of the active site. 4 residues coordinate NAD(+): Arg-136, Glu-173, Lys-290, and Lys-314. Positions 408, 411, 426, and 432 each coordinate Zn(2+). Residues 592-670 enclose the BRCT domain; it reads EIDSPFAGKT…EAEMIRLLGE (79 aa).

Belongs to the NAD-dependent DNA ligase family. LigA subfamily. Mg(2+) serves as cofactor. It depends on Mn(2+) as a cofactor.

It catalyses the reaction NAD(+) + (deoxyribonucleotide)n-3'-hydroxyl + 5'-phospho-(deoxyribonucleotide)m = (deoxyribonucleotide)n+m + AMP + beta-nicotinamide D-nucleotide.. DNA ligase that catalyzes the formation of phosphodiester linkages between 5'-phosphoryl and 3'-hydroxyl groups in double-stranded DNA using NAD as a coenzyme and as the energy source for the reaction. It is essential for DNA replication and repair of damaged DNA. The polypeptide is DNA ligase (Yersinia pseudotuberculosis serotype O:1b (strain IP 31758)).